Consider the following 437-residue polypeptide: Ribosomal protein uS12 methylthiotransferase RimO (437 aa).

One can recognise an MTTase N-terminal domain in the interval 5–116 (PTISVSHLGC…IAEVIQRVET (112 aa)). Residues Cys-14, Cys-50, Cys-79, Cys-154, Cys-158, and Cys-161 each contribute to the [4Fe-4S] cluster site. The region spanning 140 to 369 (TTNEAVAYLR…MEIQQPIAAK (230 aa)) is the Radical SAM core domain. The TRAM domain maps to 372 to 437 (QKCVGQTVEV…DVYDLYGKVI (66 aa)).

This sequence belongs to the methylthiotransferase family. RimO subfamily. The cofactor is [4Fe-4S] cluster.

It is found in the cytoplasm. The catalysed reaction is L-aspartate(89)-[ribosomal protein uS12]-hydrogen + (sulfur carrier)-SH + AH2 + 2 S-adenosyl-L-methionine = 3-methylsulfanyl-L-aspartate(89)-[ribosomal protein uS12]-hydrogen + (sulfur carrier)-H + 5'-deoxyadenosine + L-methionine + A + S-adenosyl-L-homocysteine + 2 H(+). Its function is as follows. Catalyzes the methylthiolation of an aspartic acid residue of ribosomal protein uS12. The polypeptide is Ribosomal protein uS12 methylthiotransferase RimO (Crocosphaera subtropica (strain ATCC 51142 / BH68) (Cyanothece sp. (strain ATCC 51142))).